We begin with the raw amino-acid sequence, 293 residues long: MLDSIKIKLQYLLPKQGLTQLAGWGANKQGGWLTQLVIKAFARYYKVDMKEAQDPEFSAYRTFNEFFVRPLRAGVRPVVAEENLLAQPADGAISQLGAIREGQILQAKGHNYSLEALLAGNYLLAAEFQNGQFVTTYLAPRDYHRVHMPCDGVLREMIYVPGDLFSVNPLTAANVPNLFARNERVICIFDTAFGPMAQILVGATIVGSIETVWAGTITPPREGVIRRWTYPQAGCEGAITLEKGQEMGRFKLGSTVINLFAEGKVYFAPQLNSGAVTRMGEVLAEAVPTTPSY.

Catalysis depends on charge relay system; for autoendoproteolytic cleavage activity residues aspartate 90, histidine 147, and serine 254. Serine 254 functions as the Schiff-base intermediate with substrate; via pyruvic acid; for decarboxylase activity in the catalytic mechanism. Serine 254 is subject to Pyruvic acid (Ser); by autocatalysis.

This sequence belongs to the phosphatidylserine decarboxylase family. PSD-B subfamily. Prokaryotic type I sub-subfamily. In terms of assembly, heterodimer of a large membrane-associated beta subunit and a small pyruvoyl-containing alpha subunit. Requires pyruvate as cofactor. Is synthesized initially as an inactive proenzyme. Formation of the active enzyme involves a self-maturation process in which the active site pyruvoyl group is generated from an internal serine residue via an autocatalytic post-translational modification. Two non-identical subunits are generated from the proenzyme in this reaction, and the pyruvate is formed at the N-terminus of the alpha chain, which is derived from the carboxyl end of the proenzyme. The autoendoproteolytic cleavage occurs by a canonical serine protease mechanism, in which the side chain hydroxyl group of the serine supplies its oxygen atom to form the C-terminus of the beta chain, while the remainder of the serine residue undergoes an oxidative deamination to produce ammonia and the pyruvoyl prosthetic group on the alpha chain. During this reaction, the Ser that is part of the protease active site of the proenzyme becomes the pyruvoyl prosthetic group, which constitutes an essential element of the active site of the mature decarboxylase.

The protein resides in the cell membrane. The enzyme catalyses a 1,2-diacyl-sn-glycero-3-phospho-L-serine + H(+) = a 1,2-diacyl-sn-glycero-3-phosphoethanolamine + CO2. Its pathway is phospholipid metabolism; phosphatidylethanolamine biosynthesis; phosphatidylethanolamine from CDP-diacylglycerol: step 2/2. Catalyzes the formation of phosphatidylethanolamine (PtdEtn) from phosphatidylserine (PtdSer). This is Phosphatidylserine decarboxylase proenzyme from Yersinia pseudotuberculosis serotype O:1b (strain IP 31758).